The primary structure comprises 834 residues: MARGERRRRAAAAEGARPLERARGAGRRDGRAGGARGSAGGAALAVVVLALAFGLSGRWVLAWLGVRRALTLHPAPSALPPDSSSPAVAPEFFWGTYRPHVYFGMKTRSPKPLLTGLMWAQQGATPGTPPKLRHTCEQGDGVGPYGWEFHDGLSFGRQHIYDGALRLTTEFVKRSGGHHGGDWSWRVTVEPQASGTPSFPLVSLFFYVVTDGQEVLLPEVGAKGQLKFISGHTSELGDFRLTLLPPTTPGDTVPKHGSYNVFWSSNPGLPLLTDMVKSHLNSWFHHRPPGASPERYLGLPGSLKWEERGPSGQGQFLVQQVTLKAPFSVEFVFESGSARTGRDQASEQLVGGQLTRALESHAAAFKERFERTFQLKEKGLSPEEQALGQVALSGLLGGIGYFYGQGLVLPDTGMEGSEQKMDPSLFPPVPLFSGVPSRSFFPRGFLWDEGFHQLVVQRWDPHLTREALGHWLGLLNADGWIGREQILGDEARARVPPEFLVQRAAHANPPTLLLPVIHMLEGRAPEDLAFLRRAFPRLHAWFSWLHQSQAGPVPLSYRWRGRDLALPTLLNPKTLPSGLDDYPRASHPSAAERHLDLRCWVTLGARVLSQLAEELGETEAAAELGPLAASLEAAGSLDELHWAPELGVFADFGNHTKAVQLKSRPPQGLVRVVGRPPARLQYVDALGYVSLFPLLLQLLEPSSPRLGPLLDVLADSRHLWSPFGLRSLSASSLFYKQRNTEHDPPYWRGAVWLNINYLALGALHHYGRVEGPHKVQAAKLYRELRANVVSNVRQQYQATGFLWEQYSDQDGRGMGCRPFQGWTSLVLLIMAEEY.

Over residues 1–10 the composition is skewed to basic residues; the sequence is MARGERRRRA. Residues 1 to 36 are Cytoplasmic-facing; the sequence is MARGERRRRAAAAEGARPLERARGAGRRDGRAGGAR. The interval 1–37 is disordered; it reads MARGERRRRAAAAEGARPLERARGAGRRDGRAGGARG. The Endoplasmic reticulum targeting motif lies at 3–9; sequence RGERRRR. The segment covering 17-31 has biased composition (basic and acidic residues); it reads RPLERARGAGRRDGR. Residues 37-57 traverse the membrane as a helical; Signal-anchor for type II membrane protein segment; that stretch reads GSAGGAALAVVVLALAFGLSG. Over 58–834 the chain is Lumenal; that stretch reads RWVLAWLGVR…LVLLIMAEEY (777 aa). The interval 74-136 is required for endoplasmic reticulum targeting; that stretch reads PAPSALPPDS…GTPPKLRHTC (63 aa). Catalysis depends on aspartate 580, which acts as the Proton donor. N-linked (GlcNAc...) asparagine glycosylation occurs at asparagine 654. Catalysis depends on glutamate 804, which acts as the Proton acceptor.

This sequence belongs to the glycosyl hydrolase 63 family.

The protein localises to the endoplasmic reticulum membrane. The enzyme catalyses N(4)-(alpha-D-Glc-(1-&gt;2)-alpha-D-Glc-(1-&gt;3)-alpha-D-Glc-(1-&gt;3)-alpha-D-Man-(1-&gt;2)-alpha-D-Man-(1-&gt;2)-alpha-D-Man-(1-&gt;3)-[alpha-D-Man-(1-&gt;2)-alpha-D-Man-(1-&gt;3)-[alpha-D-Man-(1-&gt;2)-alpha-D-Man-(1-&gt;6)]-alpha-D-Man-(1-&gt;6)]-beta-D-Man-(1-&gt;4)-beta-D-GlcNAc-(1-&gt;4)-beta-D-GlcNAc)-L-asparaginyl-[protein] + H2O = N(4)-(alpha-D-Glc-(1-&gt;3)-alpha-D-Glc-(1-&gt;3)-alpha-D-Man-(1-&gt;2)-alpha-D-Man-(1-&gt;2)-alpha-D-Man-(1-&gt;3)-[alpha-D-Man-(1-&gt;2)-alpha-D-Man-(1-&gt;3)-[alpha-D-Man-(1-&gt;2)-alpha-D-Man-(1-&gt;6)]-alpha-D-Man-(1-&gt;6)]-beta-D-Man-(1-&gt;4)-beta-D-GlcNAc-(1-&gt;4)-beta-D-GlcNAc)-L-asparaginyl-[protein] + beta-D-glucose. Its pathway is glycan metabolism; N-glycan degradation. In the context of N-glycan degradation, cleaves the distal alpha 1,2-linked glucose residue from the Glc(3)Man(9)GlcNAc(2) oligosaccharide precursor in a highly specific manner. The chain is Mannosyl-oligosaccharide glucosidase from Rattus norvegicus (Rat).